We begin with the raw amino-acid sequence, 359 residues long: Putative nucleotidyltransferase MAB21L1 (359 aa).

A ribonucleoside 5'-triphosphate-binding positions include 23–24 and 63–66; these read RK and YEGL. Mg(2+) is bound by residues glutamate 73 and glutamate 75. A ribonucleoside 5'-triphosphate contacts are provided by residues lysine 248 and 252–255; that span reads SILK.

It belongs to the mab-21 family. Monomer. Homodecamer; composed of 2 back to back homopentamers. The protein may exist as monomer in solution and oiligomerizes upon ligand binding.

Its subcellular location is the nucleus. Functionally, putative nucleotidyltransferase required for several aspects of embryonic development including normal development of the eye. It is unclear whether it displays nucleotidyltransferase activity in vivo. Binds single-stranded RNA (ssRNA). This chain is Putative nucleotidyltransferase MAB21L1 (MAB21L1), found in Bos taurus (Bovine).